A 184-amino-acid chain; its full sequence is Photosystem I assembly protein Ycf4 (184 aa).

A run of 2 helical transmembrane segments spans residues 22 to 42 (LCWA…GTSS) and 57 to 77 (ILFF…LFIS).

Belongs to the Ycf4 family.

The protein resides in the plastid. The protein localises to the chloroplast thylakoid membrane. In terms of biological role, seems to be required for the assembly of the photosystem I complex. The protein is Photosystem I assembly protein Ycf4 of Daucus carota (Wild carrot).